The primary structure comprises 334 residues: Fructose-1,6-bisphosphatase class 1 (334 aa).

Mg(2+) is bound by residues glutamate 92, aspartate 114, leucine 116, and aspartate 117. Substrate contacts are provided by residues 117-120 (DGSS) and asparagine 209. Glutamate 281 is a Mg(2+) binding site.

This sequence belongs to the FBPase class 1 family. In terms of assembly, homotetramer. Mg(2+) is required as a cofactor.

It localises to the cytoplasm. It catalyses the reaction beta-D-fructose 1,6-bisphosphate + H2O = beta-D-fructose 6-phosphate + phosphate. It functions in the pathway carbohydrate biosynthesis; gluconeogenesis. This Nitrosomonas eutropha (strain DSM 101675 / C91 / Nm57) protein is Fructose-1,6-bisphosphatase class 1.